The chain runs to 448 residues: 26S proteasome regulatory subunit 4 homolog (448 aa).

Residues 1–16 show a composition bias toward gly residues; it reads MGQGTPGGMGKQGGAP. 2 disordered regions span residues 1 to 56 and 93 to 112; these read MGQG…AAAR and LRPTEDKTEEDRSKVDDLRG. Basic and acidic residues-rich tracts occupy residues 17-33 and 93-111; these read GDRKPGGDGDKKDRKFE and LRPTEDKTEEDRSKVDDLR. ATP is bound at residue 234–241; the sequence is GEPGTGKT.

This sequence belongs to the AAA ATPase family.

Its subcellular location is the cytoplasm. The protein resides in the nucleus. Functionally, the 26S proteasome is involved in the ATP-dependent degradation of ubiquitinated proteins. The regulatory (or ATPase) complex confers ATP dependency and substrate specificity to the 26S complex. This chain is 26S proteasome regulatory subunit 4 homolog (TBP2), found in Oryza sativa subsp. japonica (Rice).